The chain runs to 151 residues: Glutamate mutase sigma subunit 1 (151 aa).

One can recognise a B12-binding domain in the interval Pro-7–Thr-140. Residues Ser-17–Val-21, His-20, Ser-65–Leu-67, and Asn-96–Gly-100 contribute to the adenosylcob(III)alamin site.

Belongs to the methylaspartate mutase GlmS subunit family. Heterotetramer composed of 2 epsilon subunits (GlmE) and 2 sigma subunits (GlmS). GlmE exists as a homodimer and GlmS as a monomer. Adenosylcob(III)alamin serves as cofactor.

The catalysed reaction is (2S,3S)-3-methyl-L-aspartate = L-glutamate. It participates in amino-acid degradation; L-glutamate degradation via mesaconate pathway; acetate and pyruvate from L-glutamate: step 1/4. In terms of biological role, catalyzes the carbon skeleton rearrangement of L-glutamate to L-threo-3-methylaspartate ((2S,3S)-3-methylaspartate). The protein is Glutamate mutase sigma subunit 1 of Haloarcula marismortui (strain ATCC 43049 / DSM 3752 / JCM 8966 / VKM B-1809) (Halobacterium marismortui).